A 326-amino-acid polypeptide reads, in one-letter code: Zinc finger protein 830 (326 aa).

A compositionally biased stretch (basic residues) spans 1–11 (MAASRKGKAVK). The segment at 1–37 (MAASRKGKAVKAVKQEDLRRLMQETRRDSGRQKRVES) is disordered. Basic and acidic residues predominate over residues 13-36 (VKQEDLRRLMQETRRDSGRQKRVE). Residues 50–72 (CALCDAPVKNALLWQTHVLGKQH) form a C2H2-type zinc finger. A compositionally biased stretch (low complexity) spans 83 to 108 (TAPAHTPAPAHTPAHTPAAASSSSST). 3 disordered regions span residues 83-214 (TAPA…PVRD), 237-257 (EMRQ…EEGR), and 276-309 (EELR…EEEE). Over residues 180–195 (HSGSVSKAEQQESQEP) the composition is skewed to polar residues. Residues 224-295 (KDQLEREWEE…RSRRRSQRRE (72 aa)) are a coiled coil. A compositionally biased stretch (basic and acidic residues) spans 276–286 (EELRAKQETAR). The segment covering 298-309 (PMQEEEPLEEEE) has biased composition (acidic residues).

The protein resides in the nucleus. It is found in the chromosome. It localises to the nucleus speckle. Functionally, may act as an important regulator of the cell cycle that participates in the maintenance of genome integrity. This Danio rerio (Zebrafish) protein is Zinc finger protein 830.